The chain runs to 630 residues: Biosynthetic arginine decarboxylase (630 aa).

An N6-(pyridoxal phosphate)lysine modification is found at Lys-99. Substrate is bound at residue 281–291 (VDIGGGLGVDY).

This sequence belongs to the Orn/Lys/Arg decarboxylase class-II family. SpeA subfamily. The cofactor is Mg(2+). It depends on pyridoxal 5'-phosphate as a cofactor.

The enzyme catalyses L-arginine + H(+) = agmatine + CO2. Catalyzes the biosynthesis of agmatine from arginine. The protein is Biosynthetic arginine decarboxylase of Bacteroides thetaiotaomicron (strain ATCC 29148 / DSM 2079 / JCM 5827 / CCUG 10774 / NCTC 10582 / VPI-5482 / E50).